A 245-amino-acid polypeptide reads, in one-letter code: MKIDYLTLFPEMFDGVLNHSILKRAQDKEIIQVNTVNFRDYSINKHNQVDDYPFGGGQGMVLKPEPVFNAMKDLETSEATRVILMCPQGKPFSQEIAQDLSSAEHIVFICGHYEGYDERIREHLVTDEISIGDYVLTGGELPAMTMTDAIVRLIPGVLGNEQSHQDDSFSDGLLEFPQYTRPREFEGMNVPDVLLSGNHAKIDAWRHEQKLIRTFVKRPDLLAKYPLTTEDEKILENYKKQLKTK.

S-adenosyl-L-methionine-binding positions include Gly-111 and 131-136 (IGDYVL).

This sequence belongs to the RNA methyltransferase TrmD family. As to quaternary structure, homodimer.

The protein localises to the cytoplasm. It carries out the reaction guanosine(37) in tRNA + S-adenosyl-L-methionine = N(1)-methylguanosine(37) in tRNA + S-adenosyl-L-homocysteine + H(+). Its function is as follows. Specifically methylates guanosine-37 in various tRNAs. This is tRNA (guanine-N(1)-)-methyltransferase from Staphylococcus carnosus (strain TM300).